A 205-amino-acid chain; its full sequence is Non-specific lipid transfer protein GPI-anchored 13 (205 aa).

Residues 1 to 24 (MESRKIKVMATAIALIMVAMVVDA) form the signal peptide. Cystine bridges form between Cys36–Cys77, Cys46–Cys61, Cys62–Cys104, and Cys75–Cys113. 3 N-linked (GlcNAc...) asparagine glycosylation sites follow: Asn93, Asn137, and Asn165. Residues 141–176 (SASAPTGSASEPTSMSSTPGSSAGNNSGRTTSVPGT) form a disordered region. Asn177 carries the GPI-anchor amidated asparagine lipid modification. Positions 178-205 (HAQSFSKQWLGLEVVAHFFVIFYIFILV) are cleaved as a propeptide — removed in mature form.

It belongs to the plant LTP family. Expressed preferentially in expanding leaves and sepals, restricted to the distal side. Expressed at low levels in roots and stems.

The protein localises to the cell membrane. Its function is as follows. Probable lipid transfer protein. The sequence is that of Non-specific lipid transfer protein GPI-anchored 13 from Arabidopsis thaliana (Mouse-ear cress).